The sequence spans 332 residues: tRNA U34 carboxymethyltransferase (332 aa).

Residues Lys-91, Trp-105, Lys-110, Gly-130, 152–154, 181–182, Met-196, Tyr-200, and Arg-315 each bind carboxy-S-adenosyl-L-methionine; these read DPS and IE.

Belongs to the class I-like SAM-binding methyltransferase superfamily. CmoB family. As to quaternary structure, homotetramer.

The catalysed reaction is carboxy-S-adenosyl-L-methionine + 5-hydroxyuridine(34) in tRNA = 5-carboxymethoxyuridine(34) in tRNA + S-adenosyl-L-homocysteine + H(+). In terms of biological role, catalyzes carboxymethyl transfer from carboxy-S-adenosyl-L-methionine (Cx-SAM) to 5-hydroxyuridine (ho5U) to form 5-carboxymethoxyuridine (cmo5U) at position 34 in tRNAs. The polypeptide is tRNA U34 carboxymethyltransferase (Shewanella putrefaciens (strain CN-32 / ATCC BAA-453)).